The sequence spans 248 residues: Probable transcriptional regulatory protein BH14810 (248 aa).

Belongs to the TACO1 family.

It localises to the cytoplasm. This Bartonella henselae (strain ATCC 49882 / DSM 28221 / CCUG 30454 / Houston 1) (Rochalimaea henselae) protein is Probable transcriptional regulatory protein BH14810.